A 211-amino-acid polypeptide reads, in one-letter code: Uracil phosphoribosyltransferase (211 aa).

5-phospho-alpha-D-ribose 1-diphosphate-binding positions include arginine 79, arginine 104, and 131–139; that span reads DPMLATGGS. Uracil is bound by residues isoleucine 196 and 201 to 203; that span reads GDA. Position 202 (aspartate 202) interacts with 5-phospho-alpha-D-ribose 1-diphosphate.

Belongs to the UPRTase family. The cofactor is Mg(2+).

It catalyses the reaction UMP + diphosphate = 5-phospho-alpha-D-ribose 1-diphosphate + uracil. It participates in pyrimidine metabolism; UMP biosynthesis via salvage pathway; UMP from uracil: step 1/1. Allosterically activated by GTP. Catalyzes the conversion of uracil and 5-phospho-alpha-D-ribose 1-diphosphate (PRPP) to UMP and diphosphate. This chain is Uracil phosphoribosyltransferase, found in Limosilactobacillus fermentum (strain NBRC 3956 / LMG 18251) (Lactobacillus fermentum).